Here is a 90-residue protein sequence, read N- to C-terminus: RNA-binding protein Hfq (90 aa).

Residues 10 to 70 (DGFLNLLRRE…LSTITPARPL (61 aa)) enclose the Sm domain.

The protein belongs to the Hfq family. In terms of assembly, homohexamer.

Functionally, RNA chaperone that binds small regulatory RNA (sRNAs) and mRNAs to facilitate mRNA translational regulation in response to envelope stress, environmental stress and changes in metabolite concentrations. Also binds with high specificity to tRNAs. The sequence is that of RNA-binding protein Hfq from Symbiobacterium thermophilum (strain DSM 24528 / JCM 14929 / IAM 14863 / T).